Here is a 327-residue protein sequence, read N- to C-terminus: tRNA dimethylallyltransferase (327 aa).

14–21 provides a ligand contact to ATP; that stretch reads GPTASGKT. A substrate-binding site is contributed by 16 to 21; sequence TASGKT. Interaction with substrate tRNA regions lie at residues 39-42 and 163-167; these read DSAL and QRIQR.

Belongs to the IPP transferase family. In terms of assembly, monomer. Mg(2+) serves as cofactor.

The enzyme catalyses adenosine(37) in tRNA + dimethylallyl diphosphate = N(6)-dimethylallyladenosine(37) in tRNA + diphosphate. Catalyzes the transfer of a dimethylallyl group onto the adenine at position 37 in tRNAs that read codons beginning with uridine, leading to the formation of N6-(dimethylallyl)adenosine (i(6)A). This Xanthomonas campestris pv. campestris (strain 8004) protein is tRNA dimethylallyltransferase.